A 248-amino-acid chain; its full sequence is UPF0736 protein BCE_1296 (248 aa).

The protein belongs to the UPF0736 family.

The polypeptide is UPF0736 protein BCE_1296 (Bacillus cereus (strain ATCC 10987 / NRS 248)).